The following is a 499-amino-acid chain: L-arabinose isomerase (499 aa).

Mn(2+)-binding residues include glutamate 306, glutamate 333, histidine 350, and histidine 449.

This sequence belongs to the arabinose isomerase family. The cofactor is Mn(2+).

It carries out the reaction beta-L-arabinopyranose = L-ribulose. Its pathway is carbohydrate degradation; L-arabinose degradation via L-ribulose; D-xylulose 5-phosphate from L-arabinose (bacterial route): step 1/3. In terms of biological role, catalyzes the conversion of L-arabinose to L-ribulose. The sequence is that of L-arabinose isomerase from Aeromonas salmonicida (strain A449).